The sequence spans 122 residues: Large ribosomal subunit protein uL14 (122 aa).

This sequence belongs to the universal ribosomal protein uL14 family. In terms of assembly, part of the 50S ribosomal subunit. Forms a cluster with proteins L3 and L19. In the 70S ribosome, L14 and L19 interact and together make contacts with the 16S rRNA in bridges B5 and B8.

Its function is as follows. Binds to 23S rRNA. Forms part of two intersubunit bridges in the 70S ribosome. The chain is Large ribosomal subunit protein uL14 from Dehalococcoides mccartyi (strain ATCC BAA-2266 / KCTC 15142 / 195) (Dehalococcoides ethenogenes (strain 195)).